The following is a 106-amino-acid chain: UPF0145 protein Pput_2816 (106 aa).

It belongs to the UPF0145 family.

The sequence is that of UPF0145 protein Pput_2816 from Pseudomonas putida (strain ATCC 700007 / DSM 6899 / JCM 31910 / BCRC 17059 / LMG 24140 / F1).